Here is a 257-residue protein sequence, read N- to C-terminus: Baramicin A1 (257 aa).

An N-terminal signal peptide occupies residues 1–19; sequence MKSFGLIALAICGVICVAA. A propeptide spanning residues 20 to 21 is cleaved from the precursor; it reads EP. Q22 is subject to Pyrrolidone carboxylic acid. Positions 95–122 are disordered; it reads GPNFSAKNLGPNGAKSVGIPQRARRSPQ. N-linked (GlcNAc...) asparagine glycosylation occurs at N97. A propeptide spanning residues 118-121 is cleaved from the precursor; sequence RRSP. Residue Q122 is modified to Pyrrolidone carboxylic acid. Residues 145–148 constitute a propeptide that is removed on maturation; it reads RRSP. Q149 is modified (pyrrolidone carboxylic acid). Residues 172–175 constitute a propeptide that is removed on maturation; that stretch reads RRSP. Q176 is subject to Pyrrolidone carboxylic acid. Positions 199–204 are excised as a propeptide; it reads RRGIND. An N-linked (GlcNAc...) asparagine glycan is attached at N225.

Proteolytically cleaved. In terms of tissue distribution, hemolymph (at protein level).

It localises to the secreted. Functionally, secreted immune-induced peptides induced by Toll signaling. Has a significant role in resistance to infection by the entomopathogenic fungus B.bassiana R444 and weak antifungal activity against M.rileyi PHP1705. In adult males, activity appears to be important for neuromuscular processes that mediate correct wing posture upon Toll activation. The polypeptide is Baramicin A1 (Drosophila melanogaster (Fruit fly)).